The sequence spans 343 residues: Nuclear distribution protein nudE-like 1 (343 aa).

Positions lysine 25 to valine 190 form a coiled coil. 2 disordered regions span residues arginine 184–glutamate 204 and glutamine 322–valine 343.

Belongs to the nudE family. In terms of processing, phosphorylated in mitosis.

It localises to the cytoplasm. Its subcellular location is the cytoskeleton. It is found in the microtubule organizing center. The protein resides in the centrosome. The protein localises to the spindle. Functionally, required for organization of the cellular microtubule array and microtubule anchoring at the centrosome. Positively regulates the activity of the minus-end directed microtubule motor protein dynein. May enhance dynein-mediated microtubule sliding by targeting dynein to the microtubule plus end. Positively regulates lysosome peripheral distribution and ruffled border formation in osteoclasts. The protein is Nuclear distribution protein nudE-like 1 (NDEL1) of Gallus gallus (Chicken).